A 225-amino-acid polypeptide reads, in one-letter code: Urease accessory protein UreG (225 aa).

25–32 is a binding site for GTP; it reads GPVGAGKT.

Belongs to the SIMIBI class G3E GTPase family. UreG subfamily. As to quaternary structure, homodimer. UreD, UreF and UreG form a complex that acts as a GTP-hydrolysis-dependent molecular chaperone, activating the urease apoprotein by helping to assemble the nickel containing metallocenter of UreC. The UreE protein probably delivers the nickel.

Its subcellular location is the cytoplasm. In terms of biological role, facilitates the functional incorporation of the urease nickel metallocenter. This process requires GTP hydrolysis, probably effectuated by UreG. The chain is Urease accessory protein UreG from Haemophilus influenzae (strain 86-028NP).